The sequence spans 63 residues: Adipokinetic prohormone type 1 (63 aa).

The N-terminal stretch at 1–22 is a signal peptide; it reads MVQRCLVVALLVVVVAAALCSA. Pyrrolidone carboxylic acid is present on Gln23. Thr32 bears the Threonine amide mark.

It belongs to the AKH/HRTH/RPCH family. Adipokinetic hormone precursor-related peptide (APRP) can form three type of disulfide-bond dimers: p1 (alpha-alpha), p2 (alpha-beta), and p3 (beta-beta).

The protein localises to the secreted. Functionally, this hormone, released from cells in the corpora cardiaca, causes release of diglycerides from the fat body and stimulation of muscles to use these diglycerides as an energy source during energy-demanding processes. In Schistocerca nitens (Vagrant locust), this protein is Adipokinetic prohormone type 1.